We begin with the raw amino-acid sequence, 155 residues long: Large ribosomal subunit protein uL13 (155 aa).

Belongs to the universal ribosomal protein uL13 family. In terms of assembly, part of the 50S ribosomal subunit.

Its function is as follows. This protein is one of the early assembly proteins of the 50S ribosomal subunit, although it is not seen to bind rRNA by itself. It is important during the early stages of 50S assembly. The protein is Large ribosomal subunit protein uL13 of Rickettsia rickettsii (strain Iowa).